A 420-amino-acid polypeptide reads, in one-letter code: Tyrosine-protein phosphatase non-receptor type 20 (420 aa).

Basic and acidic residues predominate over residues 1–11 (MSSPRDFRAEP). Disordered stretches follow at residues 1 to 47 (MSSP…VFEN) and 68 to 108 (DVFE…SQAL). Residues 31 to 41 (LPSSSQENTPR) show a composition bias toward polar residues. 2 positions are modified to phosphoserine: Ser76 and Ser120. The region spanning 159 to 412 (IMQEFMALEL…HFCYDIVLEV (254 aa)) is the Tyrosine-protein phosphatase domain. Substrate is bound by residues Asp323, 353 to 359 (CSAGIGR), and Gln397. Cys353 serves as the catalytic Phosphocysteine intermediate.

The protein belongs to the protein-tyrosine phosphatase family. Non-receptor class subfamily. As to expression, present in many cell lines (at protein level). Widely expressed.

It localises to the nucleus. The protein localises to the cytoplasm. The protein resides in the cytoskeleton. Its subcellular location is the microtubule organizing center. It is found in the centrosome. It catalyses the reaction O-phospho-L-tyrosyl-[protein] + H2O = L-tyrosyl-[protein] + phosphate. Functionally, tyrosine-protein phosphatase targeted to sites of actin polymerization in response of varied extracellular stimuli. Has tyrosine phosphatase activity towards various tyrosyl phosphorylated substrates. This is Tyrosine-protein phosphatase non-receptor type 20 from Homo sapiens (Human).